The sequence spans 352 residues: Cobalt transport protein NhlF (352 aa).

The next 8 membrane-spanning stretches (helical) occupy residues 23–43, 46–66, 95–115, 131–151, 206–226, 230–250, 290–310, and 323–343; these read LASV…LYLG, GNPA…VLGV, VGFF…LVVA, EIGG…VAGL, PVGL…LLTL, AATG…LFAA, VIGL…LPMF, and FEFL…GALL.

It belongs to the NiCoT transporter (TC 2.A.52) family.

It is found in the cell membrane. Cobalt uptake is inhibited by uncouplers (CCCP and 3,5-di-tert-butyl-4-hydroxybenzylidenemalononitrile) and by the addition of excess nickel. Functionally, mediates energy-dependent uptake of cobalt ions into the cell. Can also transport nickel ions, but cobalt is the preferred substrate. The chain is Cobalt transport protein NhlF (nhlF) from Rhodococcus rhodochrous.